The following is a 101-amino-acid chain: Small ribosomal subunit protein uS14 (101 aa).

This sequence belongs to the universal ribosomal protein uS14 family. As to quaternary structure, part of the 30S ribosomal subunit. Contacts proteins S3 and S10.

In terms of biological role, binds 16S rRNA, required for the assembly of 30S particles and may also be responsible for determining the conformation of the 16S rRNA at the A site. The polypeptide is Small ribosomal subunit protein uS14 (Chromohalobacter salexigens (strain ATCC BAA-138 / DSM 3043 / CIP 106854 / NCIMB 13768 / 1H11)).